The chain runs to 188 residues: uncharacterized protein (188 aa).

The next 3 membrane-spanning stretches (helical) occupy residues 6 to 26 (MIVF…SLPL), 43 to 63 (FAGR…ILFA), and 110 to 130 (ALFL…MIAA).

It is found in the membrane. This is an uncharacterized protein from Schizosaccharomyces pombe (strain 972 / ATCC 24843) (Fission yeast).